Consider the following 283-residue polypeptide: Thymidylate synthase (283 aa).

R22 contributes to the dUMP binding site. C160 serves as the catalytic Nucleophile. DUMP-binding positions include R180–D183, N191, and H221–Y223. D183 serves as a coordination point for (6R)-5,10-methylene-5,6,7,8-tetrahydrofolate. S282 serves as a coordination point for (6R)-5,10-methylene-5,6,7,8-tetrahydrofolate.

This sequence belongs to the thymidylate synthase family. Bacterial-type ThyA subfamily. Homodimer.

The protein localises to the cytoplasm. It carries out the reaction dUMP + (6R)-5,10-methylene-5,6,7,8-tetrahydrofolate = 7,8-dihydrofolate + dTMP. The protein operates within pyrimidine metabolism; dTTP biosynthesis. Catalyzes the reductive methylation of 2'-deoxyuridine-5'-monophosphate (dUMP) to 2'-deoxythymidine-5'-monophosphate (dTMP) while utilizing 5,10-methylenetetrahydrofolate (mTHF) as the methyl donor and reductant in the reaction, yielding dihydrofolate (DHF) as a by-product. This enzymatic reaction provides an intracellular de novo source of dTMP, an essential precursor for DNA biosynthesis. The chain is Thymidylate synthase from Shewanella piezotolerans (strain WP3 / JCM 13877).